We begin with the raw amino-acid sequence, 106 residues long: SH3 domain-binding glutamic acid-rich-like protein 2-B (106 aa).

Residues 61–67 (QGNPLPP) carry the SH3-binding motif.

This sequence belongs to the SH3BGR family.

The protein localises to the nucleus. In Xenopus laevis (African clawed frog), this protein is SH3 domain-binding glutamic acid-rich-like protein 2-B (sh3bgrl2-b).